Here is a 1351-residue protein sequence, read N- to C-terminus: D-lysergyl-peptide-synthetase subunit 2 (1351 aa).

Residues 285–684 (RCLSQPTASA…GRKDTQVKLR (400 aa)) form an adenylation (A) domain region. The Carrier domain maps to 828-904 (APQTTTEKLL…ALACVVRSGK (77 aa)). Residue S865 is modified to O-(pantetheine 4'-phosphoryl)serine. Residues 941–1340 (EDVYPCTPLQ…LIRDILAVPQ (400 aa)) are condensation (C) domain.

It belongs to the NRP synthetase family.

It functions in the pathway alkaloid biosynthesis; ergot alkaloid biosynthesis. D-lysergyl-peptide-synthetase subunit 2; part of the gene cluster that mediates the biosynthesis of fungal ergot alkaloid ergovaline, the predominant ergopeptine product in E.festucae var. lolii. DmaW catalyzes the first step of ergot alkaloid biosynthesis by condensing dimethylallyl diphosphate (DMAP) and tryptophan to form 4-dimethylallyl-L-tryptophan. The second step is catalyzed by the methyltransferase easF that methylates 4-dimethylallyl-L-tryptophan in the presence of S-adenosyl-L-methionine, resulting in the formation of 4-dimethylallyl-L-abrine. The catalase easC and the FAD-dependent oxidoreductase easE then transform 4-dimethylallyl-L-abrine to chanoclavine-I which is further oxidized by easD in the presence of NAD(+), resulting in the formation of chanoclavine-I aldehyde. Agroclavine dehydrogenase easG then mediates the conversion of chanoclavine-I aldehyde to agroclavine via a non-enzymatic adduct reaction: the substrate is an iminium intermediate that is formed spontaneously from chanoclavine-I aldehyde in the presence of glutathione. The presence of easA is not required to complete this reaction. Further conversion of agroclavine to paspalic acid is a two-step process involving oxidation of agroclavine to elymoclavine and of elymoclavine to paspalic acid, the second step being performed by the elymoclavine oxidase cloA. Paspalic acid is then further converted to D-lysergic acid. Ergovaline is assembled from D-lysergic acid and three different amino acids by the D-lysergyl-peptide-synthetase composed of a monomudular (lpsB) and a trimodular (lpsA) nonribosomal peptide synthetase subunit. In Epichloe festucae var. lolii (Neotyphodium lolii), this protein is D-lysergyl-peptide-synthetase subunit 2.